A 252-amino-acid chain; its full sequence is Trans-aconitate 2-methyltransferase (252 aa).

It belongs to the methyltransferase superfamily. Tam family.

It localises to the cytoplasm. It carries out the reaction trans-aconitate + S-adenosyl-L-methionine = (E)-3-(methoxycarbonyl)pent-2-enedioate + S-adenosyl-L-homocysteine. Catalyzes the S-adenosylmethionine monomethyl esterification of trans-aconitate. In Shigella flexneri, this protein is Trans-aconitate 2-methyltransferase.